Consider the following 443-residue polypeptide: Serine transporter (443 aa).

11 consecutive transmembrane segments (helical) span residues 38-60, 65-87, 111-131, 150-170, 183-203, 215-235, 265-285, 319-339, 368-388, 390-410, and 422-442; these read TGWV…PVQV, LWVF…RLFI, WGIL…FVYS, GLLS…VAIS, GMVL…VGMW, GLLV…ILFI, IAFG…TLAM, VSVI…YLGF, GIMI…APVL, FTSI…AWLV, and MSLY…FLAF.

It belongs to the amino acid/polyamine transporter 2 family. SdaC/TdcC subfamily.

It is found in the cell inner membrane. Transports both D- and L-serine; allows growth of strain CFT073 cells normally unable to transport D-serine on that substrate. Transport relies on the H(+) gradient and is not competed by L-threonine. May play a role in L-cysteine detoxification. This Escherichia coli O157:H7 protein is Serine transporter.